The chain runs to 610 residues: UvrABC system protein C (610 aa).

Residues 16 to 94 form the GIY-YIG domain; sequence SQPGVYRMYD…IKLYQPRYNV (79 aa). One can recognise a UVR domain in the interval 204-239; the sequence is DQVINQLVSRMEQASQNLAFEEAARLRDQIQAVRRV.

The protein belongs to the UvrC family. As to quaternary structure, interacts with UvrB in an incision complex.

Its subcellular location is the cytoplasm. In terms of biological role, the UvrABC repair system catalyzes the recognition and processing of DNA lesions. UvrC both incises the 5' and 3' sides of the lesion. The N-terminal half is responsible for the 3' incision and the C-terminal half is responsible for the 5' incision. The sequence is that of UvrABC system protein C from Cronobacter sakazakii (strain ATCC BAA-894) (Enterobacter sakazakii).